A 335-amino-acid chain; its full sequence is Transmembrane protein 120B (335 aa).

The stretch at 1–39 (MSLQKCQEEWGELEKEFQQLQETHKVYKQKLEELNGLQN) forms a coiled coil. Helical transmembrane passes span 100–122 (GLYLNLVLGNVNVTLLSNQAKFA), 130–150 (FKLYLTIILLLGAITCRFVLH), 157–177 (VFNFLLVWYYCTLTIRESILI), 193–213 (VSTFLSGVMLTWPDGLMYQIF), 268–288 (FLLPFLFFGHFWQLYNAITLF), and 300–320 (QVFVLALTFLLLFLGNFLTTL).

It belongs to the TMEM120 family.

It localises to the nucleus inner membrane. In terms of biological role, necessary for efficient adipogenesis. Does not show ion channel activity. This Xenopus tropicalis (Western clawed frog) protein is Transmembrane protein 120B (tmem120b).